A 523-amino-acid chain; its full sequence is FAD-dependent monooxygenase drtC (523 aa).

One can recognise an FAD-binding PCMH-type domain in the interval 77-252; it reads TSLNSACIVL…TNFEVRAFPQ (176 aa).

The protein belongs to the oxygen-dependent FAD-linked oxidoreductase family. Requires FAD as cofactor.

It participates in secondary metabolite biosynthesis; terpenoid biosynthesis. FAD-dependent monooxygenase; part of the gene cluster that mediates the biosynthesis of various drimane-type sesquiterpene esters, compounds that exhibit diverse biological activities and are widely present in eukaryotes. The pathway begins with the synthesis of the backbone drimenol by the terpene cyclase drtB using farnesyl pyrophosphate (FPP) as substrate. The cytochrome P450 monooxygenase drtD is then responsible for the hydroxylations at C-6, C-9 and C-12, as well as the oxidation of hydroxyl groups at C-6 and C-11 to a ketone and an aldehyde, respectively. Then, the biosynthesis can go in two directions, either the hydroxylated drimenol is further hydroxylated at C-2 and C-3 by an enzyme(s) not associated with the drt cluster, or the FAD-binding oxidoreductase drtC further oxidizes C-11 or C-12 to form the butyrolactone ring. DrtB, drtD and drtC are solely responsible for the formation of the different drimane structures observed during drimane sesquiterpenes biosynthesis. The polyketide synthase drtA synthesizes different lengths (C6 and C8) of PKS chains, which are then oxidized to varying degrees by the short-chain dehydrogenase drtF. Finally, these PKS chains are transferred onto drimane sesquiterpenes by the acyltransferase drtE, forming the sesquiterpene esters. In addition to the different fatty acyl-CoA chains produced by drtA, drtE is also able to use cinnamoyl-CoA as a substrate. This is FAD-dependent monooxygenase drtC from Aspergillus calidoustus.